We begin with the raw amino-acid sequence, 655 residues long: p-hydroxybenzoic acid efflux pump subunit AaeB (655 aa).

Helical transmembrane passes span 13–33, 38–58, 69–89, 93–113, 121–141, 152–172, 370–390, 407–427, 431–451, 459–479, and 482–502; these read FAVK…HFQL, WAVL…GGEP, LRII…ISMI, LLMI…SSLV, WGLS…EPLL, EIVI…PRSI, LFWL…IAVV, FIYG…VIIP, QSML…GIEV, MGAL…TFHF, and FLDS…VILL.

This sequence belongs to the aromatic acid exporter ArAE (TC 2.A.85) family.

Its subcellular location is the cell inner membrane. In terms of biological role, forms an efflux pump with AaeA. Could function as a metabolic relief valve, allowing to eliminate certain compounds when they accumulate to high levels in the cell. This is p-hydroxybenzoic acid efflux pump subunit AaeB from Salmonella agona (strain SL483).